The chain runs to 90 residues: Progonadoliberin-3 (90 aa).

The N-terminal stretch at 1 to 23 (MEASSRVTVQVLLLALVVQVTLS) is a signal peptide. Pyrrolidone carboxylic acid is present on Gln24. Gly33 bears the Glycine amide mark.

Belongs to the GnRH family.

Its subcellular location is the secreted. Its function is as follows. Stimulates the secretion of gonadotropins. This chain is Progonadoliberin-3 (gnrh3), found in Pagrus major (Red sea bream).